The following is a 295-amino-acid chain: Pantothenate synthetase (295 aa).

30 to 37 (MGNLHDGH) contributes to the ATP binding site. The active-site Proton donor is histidine 37. Glutamine 61 is a (R)-pantoate binding site. Position 61 (glutamine 61) interacts with beta-alanine. An ATP-binding site is contributed by 149–152 (GEKD). Glutamine 155 serves as a coordination point for (R)-pantoate. Residues valine 178 and 186 to 189 (MSSR) contribute to the ATP site.

Belongs to the pantothenate synthetase family. As to quaternary structure, homodimer.

The protein localises to the cytoplasm. It catalyses the reaction (R)-pantoate + beta-alanine + ATP = (R)-pantothenate + AMP + diphosphate + H(+). The protein operates within cofactor biosynthesis; (R)-pantothenate biosynthesis; (R)-pantothenate from (R)-pantoate and beta-alanine: step 1/1. Catalyzes the condensation of pantoate with beta-alanine in an ATP-dependent reaction via a pantoyl-adenylate intermediate. This Photobacterium profundum (strain SS9) protein is Pantothenate synthetase.